Reading from the N-terminus, the 278-residue chain is Replication protein A 32 kDa subunit B (278 aa).

Residues 70-143 constitute a DNA-binding region (OB); the sequence is VVIVGRISRM…RSVNVFSVRP (74 aa).

It belongs to the replication factor A protein 2 family. As to quaternary structure, heterotrimer of RPA1, RPA2 and RPA3 (canonical replication protein A complex). Phosphorylated in a cell-cycle-dependent manner (from the S phase until mitosis). In response to DNA damage, recruited to DNA-repair nuclear foci, as a hypophosphorylated form.

The protein resides in the nucleus. Its function is as follows. Component of the replication protein A complex (RPA) required for DNA recombination, repair and replication. The activity of RPA is mediated by single-stranded DNA binding and protein interactions. Required fo cell division in meristems. Involved in the maintenance of transcriptional epigenetic gene silencing (TGS) at specific loci (including some transposons) by regulating histone H3 acetylation, 'Lys-4' and 'Lys-9' methylation. The chain is Replication protein A 32 kDa subunit B (RPA2B) from Arabidopsis thaliana (Mouse-ear cress).